Consider the following 235-residue polypeptide: Regulator of G-protein signaling 18 (235 aa).

Ser-49 carries the post-translational modification Phosphoserine. The RGS domain maps to 86-202 (SFDKLLSHRD…LKSEIYLHLI (117 aa)). Residues Ser-216 and Ser-218 each carry the phosphoserine modification.

The protein localises to the cytoplasm. Inhibits signal transduction by increasing the GTPase activity of G protein alpha subunits thereby driving them into their inactive GDP-bound form. Binds to G(i) alpha-1, G(i) alpha-2, G(i) alpha-3 and G(q) alpha. This is Regulator of G-protein signaling 18 (Rgs18) from Rattus norvegicus (Rat).